Here is a 94-residue protein sequence, read N- to C-terminus: Co-chaperonin GroES (94 aa).

The protein belongs to the GroES chaperonin family. As to quaternary structure, heptamer of 7 subunits arranged in a ring. Interacts with the chaperonin GroEL.

It localises to the cytoplasm. Its function is as follows. Together with the chaperonin GroEL, plays an essential role in assisting protein folding. The GroEL-GroES system forms a nano-cage that allows encapsulation of the non-native substrate proteins and provides a physical environment optimized to promote and accelerate protein folding. GroES binds to the apical surface of the GroEL ring, thereby capping the opening of the GroEL channel. This chain is Co-chaperonin GroES, found in Brevibacillus choshinensis.